The chain runs to 394 residues: Phosphoglycerate kinase (394 aa).

Substrate is bound by residues 21–23 (DLN), Arg-37, 60–63 (HLGR), Arg-115, and Arg-148. ATP is bound by residues Lys-199, Glu-321, and 347–350 (GGDT).

It belongs to the phosphoglycerate kinase family. As to quaternary structure, monomer.

Its subcellular location is the cytoplasm. The enzyme catalyses (2R)-3-phosphoglycerate + ATP = (2R)-3-phospho-glyceroyl phosphate + ADP. It functions in the pathway carbohydrate degradation; glycolysis; pyruvate from D-glyceraldehyde 3-phosphate: step 2/5. In Azoarcus sp. (strain BH72), this protein is Phosphoglycerate kinase.